The following is a 290-amino-acid chain: Putative OX-2 membrane glycoprotein homolog (290 aa).

A signal peptide spans 1 to 17 (MSSLMLRLLPLLYIISA). Residues 18–267 (HFVLHPETSP…SDETVFTWTV (250 aa)) are Extracellular-facing. Positions 23-135 (PETSPSLIYE…TFTVDNEKTS (113 aa)) constitute an Ig-like V-type domain. Cysteines 41 and 125 form a disulfide. N-linked (GlcNAc...) asparagine; by host glycans are attached at residues Asn-71, Asn-104, Asn-194, and Asn-202. The Ig-like C2-type domain occupies 146–236 (PIVVLYFRYL…TNQKASALVT (91 aa)). The chain crosses the membrane as a helical span at residues 268-288 (PLILILISVIVLLISVCIVAF). Over 289-290 (KS) the chain is Cytoplasmic.

The protein resides in the membrane. This Homo sapiens (Human) protein is Putative OX-2 membrane glycoprotein homolog (U85).